The primary structure comprises 174 residues: U-stichotoxin-Hau2a (174 aa).

The first 18 residues, 1–18 (MKPIFIVALLFSTCLVNA), serve as a signal peptide directing secretion. Residues 19–33 (KPSINDADIKREPEP) constitute a propeptide that is removed on maturation. The residue at position 39 (Pro-39) is a Hydroxyproline. Intrachain disulfides connect Cys-40-Cys-51 and Cys-43-Cys-58. Positions 61–67 (RKREPEP) are excised as a propeptide. Pro-73 is subject to Hydroxyproline. 2 disulfide bridges follow: Cys-74-Cys-85 and Cys-77-Cys-92. A propeptide spanning residues 95-101 (RKREPEP) is cleaved from the precursor. Pro-107 bears the Hydroxyproline mark. Disulfide bonds link Cys-108-Cys-119 and Cys-111-Cys-126. Residues 129–135 (RKREPEP) constitute a propeptide that is removed on maturation. Pro-141 carries the post-translational modification Hydroxyproline. Disulfide bonds link Cys-142–Cys-153 and Cys-145–Cys-160. Positions 163 to 174 (RKREPENQDLWS) are excised as a propeptide.

This sequence belongs to the sea anemone BBH family.

It localises to the secreted. The protein resides in the nematocyst. Its function is as follows. Neurotoxin that paralyzes freshwater crabs at high concentration. This chain is U-stichotoxin-Hau2a, found in Heteractis aurora (Banded sea anemone).